The chain runs to 314 residues: Methionyl-tRNA formyltransferase (314 aa).

(6S)-5,6,7,8-tetrahydrofolate is bound at residue 110–113; sequence SLLP.

It belongs to the Fmt family.

It catalyses the reaction L-methionyl-tRNA(fMet) + (6R)-10-formyltetrahydrofolate = N-formyl-L-methionyl-tRNA(fMet) + (6S)-5,6,7,8-tetrahydrofolate + H(+). Its function is as follows. Attaches a formyl group to the free amino group of methionyl-tRNA(fMet). The formyl group appears to play a dual role in the initiator identity of N-formylmethionyl-tRNA by promoting its recognition by IF2 and preventing the misappropriation of this tRNA by the elongation apparatus. The sequence is that of Methionyl-tRNA formyltransferase from Lactobacillus acidophilus (strain ATCC 700396 / NCK56 / N2 / NCFM).